Reading from the N-terminus, the 371-residue chain is Putative glutamate--cysteine ligase 2 (371 aa).

Belongs to the glutamate--cysteine ligase type 2 family. YbdK subfamily.

The enzyme catalyses L-cysteine + L-glutamate + ATP = gamma-L-glutamyl-L-cysteine + ADP + phosphate + H(+). Its function is as follows. ATP-dependent carboxylate-amine ligase which exhibits weak glutamate--cysteine ligase activity. This chain is Putative glutamate--cysteine ligase 2, found in Cupriavidus taiwanensis (strain DSM 17343 / BCRC 17206 / CCUG 44338 / CIP 107171 / LMG 19424 / R1) (Ralstonia taiwanensis (strain LMG 19424)).